Here is a 539-residue protein sequence, read N- to C-terminus: G protein-coupled receptor associated sorting protein 3 (539 aa).

A compositionally biased stretch (basic residues) spans 1–10; that stretch reads MTGSKNKARA. 2 disordered regions span residues 1–112 and 134–172; these read MTGS…NWFW and VAKC…EENV. 2 stretches are compositionally biased toward basic and acidic residues: residues 66 to 80 and 88 to 106; these read VVAE…ESKA and FNHR…DKPS. Positions 134-146 are enriched in polar residues; the sequence is VAKCENKPSTSIQ.

It belongs to the GPRASP family. In terms of assembly, homodimer.

It localises to the cytoplasm. Its subcellular location is the nucleus. In terms of biological role, survival and differentiation promoting protein that plays a role in the regulation of neurosynaptogenesis. Induces phosphatase PP2A activity which results in APP dephosphorylation and inhibits BACE1-mediated processing of APP. In Mus musculus (Mouse), this protein is G protein-coupled receptor associated sorting protein 3 (Gprasp3).